The chain runs to 263 residues: Indole-3-glycerol phosphate synthase (263 aa).

This sequence belongs to the TrpC family.

The enzyme catalyses 1-(2-carboxyphenylamino)-1-deoxy-D-ribulose 5-phosphate + H(+) = (1S,2R)-1-C-(indol-3-yl)glycerol 3-phosphate + CO2 + H2O. Its pathway is amino-acid biosynthesis; L-tryptophan biosynthesis; L-tryptophan from chorismate: step 4/5. The protein is Indole-3-glycerol phosphate synthase of Sulfurimonas denitrificans (strain ATCC 33889 / DSM 1251) (Thiomicrospira denitrificans (strain ATCC 33889 / DSM 1251)).